A 475-amino-acid polypeptide reads, in one-letter code: Ribulose bisphosphate carboxylase large chain (475 aa).

Residues Met1–Ser2 constitute a propeptide that is removed on maturation. Position 3 is an N-acetylproline (Pro3). The residue at position 14 (Lys14) is an N6,N6,N6-trimethyllysine. Residues Asn123 and Thr173 each coordinate substrate. Lys175 functions as the Proton acceptor in the catalytic mechanism. Lys177 contacts substrate. Lys201, Asp203, and Glu204 together coordinate Mg(2+). An N6-carboxylysine modification is found at Lys201. His294 acts as the Proton acceptor in catalysis. Positions 295, 327, and 379 each coordinate substrate.

Belongs to the RuBisCO large chain family. Type I subfamily. Heterohexadecamer of 8 large chains and 8 small chains; disulfide-linked. The disulfide link is formed within the large subunit homodimers. Mg(2+) is required as a cofactor. The disulfide bond which can form in the large chain dimeric partners within the hexadecamer appears to be associated with oxidative stress and protein turnover.

It localises to the plastid. Its subcellular location is the chloroplast. It catalyses the reaction 2 (2R)-3-phosphoglycerate + 2 H(+) = D-ribulose 1,5-bisphosphate + CO2 + H2O. It carries out the reaction D-ribulose 1,5-bisphosphate + O2 = 2-phosphoglycolate + (2R)-3-phosphoglycerate + 2 H(+). Its function is as follows. RuBisCO catalyzes two reactions: the carboxylation of D-ribulose 1,5-bisphosphate, the primary event in carbon dioxide fixation, as well as the oxidative fragmentation of the pentose substrate in the photorespiration process. Both reactions occur simultaneously and in competition at the same active site. The polypeptide is Ribulose bisphosphate carboxylase large chain (Angiopteris lygodiifolia (Turnip fern)).